A 563-amino-acid chain; its full sequence is Arginine--tRNA ligase (563 aa).

The short motif at 137–147 (ANPTGLLHMGN) is the 'HIGH' region element.

It belongs to the class-I aminoacyl-tRNA synthetase family. Monomer.

The protein localises to the cytoplasm. It catalyses the reaction tRNA(Arg) + L-arginine + ATP = L-arginyl-tRNA(Arg) + AMP + diphosphate. This Desulforudis audaxviator (strain MP104C) protein is Arginine--tRNA ligase.